A 426-amino-acid chain; its full sequence is Enolase (426 aa).

Gln163 contributes to the (2R)-2-phosphoglycerate binding site. Glu205 (proton donor) is an active-site residue. Positions 242, 283, and 310 each coordinate Mg(2+). Residues Lys335, Arg364, Ser365, and Lys386 each coordinate (2R)-2-phosphoglycerate. Catalysis depends on Lys335, which acts as the Proton acceptor.

It belongs to the enolase family. It depends on Mg(2+) as a cofactor.

Its subcellular location is the cytoplasm. It localises to the secreted. It is found in the cell surface. It carries out the reaction (2R)-2-phosphoglycerate = phosphoenolpyruvate + H2O. It functions in the pathway carbohydrate degradation; glycolysis; pyruvate from D-glyceraldehyde 3-phosphate: step 4/5. Functionally, catalyzes the reversible conversion of 2-phosphoglycerate (2-PG) into phosphoenolpyruvate (PEP). It is essential for the degradation of carbohydrates via glycolysis. The protein is Enolase of Clavibacter michiganensis subsp. michiganensis (strain NCPPB 382).